The following is a 391-amino-acid chain: Phosphoglycerate kinase (391 aa).

Residues 21-23 (DLN), arginine 36, 59-62 (HLGR), arginine 113, and arginine 146 each bind substrate. Residues lysine 197, glutamate 319, and 345–348 (GGDT) each bind ATP.

This sequence belongs to the phosphoglycerate kinase family. As to quaternary structure, monomer.

The protein localises to the cytoplasm. The enzyme catalyses (2R)-3-phosphoglycerate + ATP = (2R)-3-phospho-glyceroyl phosphate + ADP. Its pathway is carbohydrate degradation; glycolysis; pyruvate from D-glyceraldehyde 3-phosphate: step 2/5. In Xylella fastidiosa (strain Temecula1 / ATCC 700964), this protein is Phosphoglycerate kinase.